The chain runs to 336 residues: USG-1 protein homolog (336 aa).

This sequence belongs to the aspartate-semialdehyde dehydrogenase family.

The protein is USG-1 protein homolog (usg) of Pseudomonas aeruginosa (strain ATCC 15692 / DSM 22644 / CIP 104116 / JCM 14847 / LMG 12228 / 1C / PRS 101 / PAO1).